Consider the following 88-residue polypeptide: Small ribosomal subunit protein bS16 (88 aa).

The protein belongs to the bacterial ribosomal protein bS16 family.

The polypeptide is Small ribosomal subunit protein bS16 (Mesomycoplasma hyopneumoniae (strain 232) (Mycoplasma hyopneumoniae)).